A 342-amino-acid polypeptide reads, in one-letter code: S-adenosylmethionine:tRNA ribosyltransferase-isomerase (342 aa).

Belongs to the QueA family. In terms of assembly, monomer.

The protein resides in the cytoplasm. The catalysed reaction is 7-aminomethyl-7-carbaguanosine(34) in tRNA + S-adenosyl-L-methionine = epoxyqueuosine(34) in tRNA + adenine + L-methionine + 2 H(+). It participates in tRNA modification; tRNA-queuosine biosynthesis. Transfers and isomerizes the ribose moiety from AdoMet to the 7-aminomethyl group of 7-deazaguanine (preQ1-tRNA) to give epoxyqueuosine (oQ-tRNA). The sequence is that of S-adenosylmethionine:tRNA ribosyltransferase-isomerase from Geobacillus sp. (strain WCH70).